Consider the following 808-residue polypeptide: Protein SQS1 (808 aa).

Composition is skewed to basic residues over residues Met1–Gly20 and Arg28–Arg37. Disordered stretches follow at residues Met1–Ser67, Arg151–Ile180, and Glu485–Gly529. Composition is skewed to basic and acidic residues over residues Arg39–Ala48 and Lys153–Glu179. The 63-residue stretch at Gly621–Lys683 folds into the R3H domain. Residues Gln748–Glu795 form the G-patch domain. The disordered stretch occupies residues Gly764–Lys808. The segment covering Arg782–Arg791 has biased composition (basic residues).

The protein belongs to the SQS1 family.

Its subcellular location is the cytoplasm. It is found in the nucleus. Its function is as follows. May be involved in splicing. The sequence is that of Protein SQS1 (SQS1) from Candida glabrata (strain ATCC 2001 / BCRC 20586 / JCM 3761 / NBRC 0622 / NRRL Y-65 / CBS 138) (Yeast).